We begin with the raw amino-acid sequence, 629 residues long: Long-chain-fatty-acid--AMP ligase FadD32 (629 aa).

ATP contacts are provided by residues 186-191 (TSGSTR), Ser341, Ala345, Asp468, and Arg482.

Belongs to the ATP-dependent AMP-binding enzyme family. In terms of assembly, monomer.

The catalysed reaction is a long-chain fatty acid + holo-[ACP] + ATP = a long-chain fatty acyl-[ACP] + AMP + diphosphate. The enzyme catalyses dodecanoate + ATP + H(+) = dodecanoyl-AMP + diphosphate. It carries out the reaction tetradecanoate + ATP + H(+) = tetradecanoyl-AMP + diphosphate. The protein operates within lipid metabolism; mycolic acid biosynthesis. With respect to regulation, the acyl-AMP ligase activity is inhibited by the alkylphosphate esters of AMP, adenosine 50-dodecylphosphate (AMPC12) and eicosyl-AMP (AMPC20). In terms of biological role, involved in the biosynthesis of mycolic acids. Catalyzes the activation of long-chain fatty acids as acyl-adenylates (acyl-AMP), which are then transferred to the phosphopantetheine arm of the polyketide synthase Pks13 for further chain extension. Can use dodecanoate (C12) and tetradecanoate (C14). The polypeptide is Long-chain-fatty-acid--AMP ligase FadD32 (fadD32) (Mycobacterium marinum (strain ATCC BAA-535 / M)).